Consider the following 156-residue polypeptide: Small ribosomal subunit protein uS7 (156 aa).

Belongs to the universal ribosomal protein uS7 family. As to quaternary structure, part of the 30S ribosomal subunit. Contacts proteins S9 and S11.

In terms of biological role, one of the primary rRNA binding proteins, it binds directly to 16S rRNA where it nucleates assembly of the head domain of the 30S subunit. Is located at the subunit interface close to the decoding center, probably blocks exit of the E-site tRNA. This Bradyrhizobium diazoefficiens (strain JCM 10833 / BCRC 13528 / IAM 13628 / NBRC 14792 / USDA 110) protein is Small ribosomal subunit protein uS7.